The chain runs to 391 residues: Homoserine O-acetyltransferase (391 aa).

The AB hydrolase-1 domain occupies 50–360 (NAILICHALT…DKGHDAFLLD (311 aa)). Catalysis depends on serine 155, which acts as the Nucleophile. Residue arginine 225 participates in substrate binding. Catalysis depends on residues aspartate 321 and histidine 354. Aspartate 355 lines the substrate pocket.

The protein belongs to the AB hydrolase superfamily. MetX family. Homodimer.

The protein localises to the cytoplasm. It catalyses the reaction L-homoserine + acetyl-CoA = O-acetyl-L-homoserine + CoA. The protein operates within amino-acid biosynthesis; L-methionine biosynthesis via de novo pathway; O-acetyl-L-homoserine from L-homoserine: step 1/1. Its function is as follows. Transfers an acetyl group from acetyl-CoA to L-homoserine, forming acetyl-L-homoserine. This chain is Homoserine O-acetyltransferase, found in Rhodospirillum rubrum (strain ATCC 11170 / ATH 1.1.1 / DSM 467 / LMG 4362 / NCIMB 8255 / S1).